The primary structure comprises 491 residues: V-type proton ATPase subunit B 1 (491 aa).

Arg-380 contacts ATP.

Belongs to the ATPase alpha/beta chains family. V-ATPase is a heteromultimeric enzyme made up of two complexes: the ATP-hydrolytic V1 complex and the proton translocation V0 complex. The V1 complex consists of three catalytic AB heterodimers that form a heterohexamer, three peripheral stalks each consisting of EG heterodimers, one central rotor including subunits D and F, and the regulatory subunits C and H. The proton translocation complex V0 consists of the proton transport subunit a, a ring of proteolipid subunits c9c'', rotary subunit d, subunits e and f, and the accessory subunits vah-19/Ac45 and vah-20/PRR. Expressed ubiquitously. Highly expressed in the H-shaped excretory cell, the excretory pore, the intestine, and hypodermal cells. Expressed in the nervous system. Expressed at low levels in muscles.

In terms of biological role, non-catalytic subunit of the V1 complex of vacuolar(H+)-ATPase (V-ATPase), a multisubunit enzyme composed of a peripheral complex (V1) that hydrolyzes ATP and a membrane integral complex (V0) that translocates protons. V-ATPase is responsible for acidifying and maintaining the pH of intracellular compartments and in some cell types, is targeted to the plasma membrane, where it is responsible for acidifying the extracellular environment. Essential for the proper assembly and activity of V-ATPase. Required maternally for early embryogenesis and zygotically during morphogenesis. Specifically, involved in the clearance of apoptotic cell corpses in embryos. Also, during embryonic development, the V-ATPase is required to repress fusion of epidermal cells probably by negatively regulating eff-1-mediated cell fusion. In neurons, required for necrotic cell death by promoting intracellular acidification. Required for cell death induced by hypoxia. Required for acidification of synaptic vesicles and the release of neurotransmitters from adult neurons. The chain is V-type proton ATPase subunit B 1 from Caenorhabditis elegans.